The sequence spans 147 residues: Small ribosomal subunit protein eS19 (147 aa).

The protein belongs to the eukaryotic ribosomal protein eS19 family. In terms of assembly, part of the 30S ribosomal subunit.

In terms of biological role, may be involved in maturation of the 30S ribosomal subunit. The chain is Small ribosomal subunit protein eS19 from Archaeoglobus fulgidus (strain ATCC 49558 / DSM 4304 / JCM 9628 / NBRC 100126 / VC-16).